A 176-amino-acid chain; its full sequence is Ferritin heavy polypeptide-like 17E (176 aa).

In terms of domain architecture, Ferritin-like diiron spans 10 to 159 (QNYDWQCEDA…GYLTNLRQMG (150 aa)). Cys-27, Glu-107, and Gln-141 together coordinate Fe cation.

The protein belongs to the ferritin family. In terms of tissue distribution, expressed in the testes and spermatogonia.

The chain is Ferritin heavy polypeptide-like 17E from Mus musculus (Mouse).